We begin with the raw amino-acid sequence, 330 residues long: Beta-ketoacyl-[acyl-carrier-protein] synthase III (330 aa).

Residues Cys111 and His249 contribute to the active site. Positions 250–254 (QANTR) are ACP-binding. Asn279 is a catalytic residue.

It belongs to the thiolase-like superfamily. FabH family. Homodimer.

The protein localises to the cytoplasm. It carries out the reaction malonyl-[ACP] + acetyl-CoA + H(+) = 3-oxobutanoyl-[ACP] + CO2 + CoA. It functions in the pathway lipid metabolism; fatty acid biosynthesis. Catalyzes the condensation reaction of fatty acid synthesis by the addition to an acyl acceptor of two carbons from malonyl-ACP. Catalyzes the first condensation reaction which initiates fatty acid synthesis and may therefore play a role in governing the total rate of fatty acid production. Possesses both acetoacetyl-ACP synthase and acetyl transacylase activities. Its substrate specificity determines the biosynthesis of branched-chain and/or straight-chain of fatty acids. The chain is Beta-ketoacyl-[acyl-carrier-protein] synthase III from Pseudomonas aeruginosa (strain LESB58).